The primary structure comprises 278 residues: Shikimate dehydrogenase (NADP(+)) (278 aa).

Shikimate contacts are provided by residues Ser-18–Ser-20 and Thr-65. The Proton acceptor role is filled by Lys-69. NADP(+) is bound at residue Glu-80. The shikimate site is built by Asn-89 and Asp-104. NADP(+) contacts are provided by residues Gly-129–Ser-133 and Leu-218. Tyr-220 lines the shikimate pocket. Gly-241 serves as a coordination point for NADP(+).

The protein belongs to the shikimate dehydrogenase family. Homodimer.

It carries out the reaction shikimate + NADP(+) = 3-dehydroshikimate + NADPH + H(+). Its pathway is metabolic intermediate biosynthesis; chorismate biosynthesis; chorismate from D-erythrose 4-phosphate and phosphoenolpyruvate: step 4/7. Functionally, involved in the biosynthesis of the chorismate, which leads to the biosynthesis of aromatic amino acids. Catalyzes the reversible NADPH linked reduction of 3-dehydroshikimate (DHSA) to yield shikimate (SA). The polypeptide is Shikimate dehydrogenase (NADP(+)) (Rhodopseudomonas palustris (strain TIE-1)).